A 320-amino-acid polypeptide reads, in one-letter code: Ribosomal RNA small subunit methyltransferase H (320 aa).

Residues G42 to H44, D62, F86, D108, and Q115 contribute to the S-adenosyl-L-methionine site.

It belongs to the methyltransferase superfamily. RsmH family.

It is found in the cytoplasm. It catalyses the reaction cytidine(1402) in 16S rRNA + S-adenosyl-L-methionine = N(4)-methylcytidine(1402) in 16S rRNA + S-adenosyl-L-homocysteine + H(+). In terms of biological role, specifically methylates the N4 position of cytidine in position 1402 (C1402) of 16S rRNA. The polypeptide is Ribosomal RNA small subunit methyltransferase H (Yersinia enterocolitica serotype O:8 / biotype 1B (strain NCTC 13174 / 8081)).